The chain runs to 341 residues: S-adenosylmethionine:tRNA ribosyltransferase-isomerase (341 aa).

It belongs to the QueA family. In terms of assembly, monomer.

It localises to the cytoplasm. The enzyme catalyses 7-aminomethyl-7-carbaguanosine(34) in tRNA + S-adenosyl-L-methionine = epoxyqueuosine(34) in tRNA + adenine + L-methionine + 2 H(+). It functions in the pathway tRNA modification; tRNA-queuosine biosynthesis. Functionally, transfers and isomerizes the ribose moiety from AdoMet to the 7-aminomethyl group of 7-deazaguanine (preQ1-tRNA) to give epoxyqueuosine (oQ-tRNA). This is S-adenosylmethionine:tRNA ribosyltransferase-isomerase from Caldanaerobacter subterraneus subsp. tengcongensis (strain DSM 15242 / JCM 11007 / NBRC 100824 / MB4) (Thermoanaerobacter tengcongensis).